We begin with the raw amino-acid sequence, 221 residues long: Ras-related protein Rab-27A (221 aa).

S2 is subject to N-acetylserine. A Phosphoserine modification is found at S2. 16-24 (GDSGVGKTS) is a GTP binding site. An Effector region motif is present at residues 38–46 (FITTVGIDF). GTP-binding positions include 74–78 (DTAGQ), 133–136 (NKSD), and 163–165 (SAA). Cysteines 123 and 188 form a disulfide. 2 S-geranylgeranyl cysteine lipidation sites follow: C219 and C221. C221 is subject to Cysteine methyl ester.

This sequence belongs to the small GTPase superfamily. Rab family. In terms of assembly, binds SYTL1, SLAC2B, MYRIP, SYTL3, SYTL4 and SYTL5. Interacts with RPH3A and RPH3A. Binds MLPH and SYTL2. Interacts with UNC13D. Does not interact with the BLOC-3 complex (heterodimer of HPS1 and HPS4). Interacts (GDP-bound form preferentially) with DENND10. In terms of tissue distribution, high levels in eye, intestine, lung, pancreas and spleen, and low or absent in brain, liver, heart, kidney, and skeletal muscle.

It localises to the membrane. It is found in the melanosome. The protein resides in the late endosome. The protein localises to the lysosome. It catalyses the reaction GTP + H2O = GDP + phosphate + H(+). Its activity is regulated as follows. Regulated by guanine nucleotide exchange factors (GEFs) which promote the exchange of bound GDP for free GTP, GTPase activating proteins (GAPs) which increase the GTP hydrolysis activity, and GDP dissociation inhibitors which inhibit the dissociation of the nucleotide from the GTPase. Activated by GEFs such as DENND10. Small GTPase which cycles between active GTP-bound and inactive GDP-bound states. In its active state, binds to a variety of effector proteins to regulate homeostasis of late endocytic pathway, including endosomal positioning, maturation and secretion. Plays a role in cytotoxic granule exocytosis in lymphocytes. Required for both granule maturation and granule docking and priming at the immunologic synapse. The polypeptide is Ras-related protein Rab-27A (Rab27a) (Rattus norvegicus (Rat)).